Reading from the N-terminus, the 527-residue chain is Bifunctional purine biosynthesis protein PurH (527 aa).

Residues Met1–Thr149 enclose the MGS-like domain.

The protein belongs to the PurH family.

It carries out the reaction (6R)-10-formyltetrahydrofolate + 5-amino-1-(5-phospho-beta-D-ribosyl)imidazole-4-carboxamide = 5-formamido-1-(5-phospho-D-ribosyl)imidazole-4-carboxamide + (6S)-5,6,7,8-tetrahydrofolate. It catalyses the reaction IMP + H2O = 5-formamido-1-(5-phospho-D-ribosyl)imidazole-4-carboxamide. It functions in the pathway purine metabolism; IMP biosynthesis via de novo pathway; 5-formamido-1-(5-phospho-D-ribosyl)imidazole-4-carboxamide from 5-amino-1-(5-phospho-D-ribosyl)imidazole-4-carboxamide (10-formyl THF route): step 1/1. The protein operates within purine metabolism; IMP biosynthesis via de novo pathway; IMP from 5-formamido-1-(5-phospho-D-ribosyl)imidazole-4-carboxamide: step 1/1. The sequence is that of Bifunctional purine biosynthesis protein PurH from Xanthomonas euvesicatoria pv. vesicatoria (strain 85-10) (Xanthomonas campestris pv. vesicatoria).